The primary structure comprises 635 residues: Probable Xaa-Pro aminopeptidase P (635 aa).

Residues D432, D443, E541, and E555 each contribute to the Mn(2+) site.

It belongs to the peptidase M24B family. It depends on Mn(2+) as a cofactor.

It catalyses the reaction Release of any N-terminal amino acid, including proline, that is linked to proline, even from a dipeptide or tripeptide.. Its function is as follows. Catalyzes the removal of a penultimate prolyl residue from the N-termini of peptides. This chain is Probable Xaa-Pro aminopeptidase P (AMPP), found in Arthroderma gypseum (strain ATCC MYA-4604 / CBS 118893) (Microsporum gypseum).